The following is a 307-amino-acid chain: D-alanine--D-alanine ligase (307 aa).

The ATP-grasp domain occupies lysine 110–leucine 299. Proline 136–threonine 185 provides a ligand contact to ATP. Aspartate 253, glutamate 266, and asparagine 268 together coordinate Mg(2+).

Belongs to the D-alanine--D-alanine ligase family. Mg(2+) serves as cofactor. The cofactor is Mn(2+).

Its subcellular location is the cytoplasm. It catalyses the reaction 2 D-alanine + ATP = D-alanyl-D-alanine + ADP + phosphate + H(+). It functions in the pathway cell wall biogenesis; peptidoglycan biosynthesis. In terms of biological role, cell wall formation. This is D-alanine--D-alanine ligase from Alcanivorax borkumensis (strain ATCC 700651 / DSM 11573 / NCIMB 13689 / SK2).